The following is a 407-amino-acid chain: Protein-glutamine gamma-glutamyltransferase (407 aa).

An N-terminal signal peptide occupies residues 1–31 (MRIRRRALVFATMSAVLCTAGFMPSAGEAAA). A propeptide spanning residues 32–76 (DNGAGEETKSYAETYRLTADDVANINALNESAPAASSAGPSFRAP) is cleaved from the precursor. A compositionally biased stretch (low complexity) spans 62 to 72 (SAPAASSAGPS). Positions 62-98 (SAPAASSAGPSFRAPDSDDRVTPPAEPLDRMPDPYRP) are disordered. Residues 76–94 (PDSDDRVTPPAEPLDRMPD) are compositionally biased toward basic and acidic residues. Cys140 is an active-site residue. A disordered region spans residues 282–322 (QDRSSSADKRKYGDPDAFRPAPGTGLVDMSRDRNIPRSPTS). A compositionally biased stretch (basic and acidic residues) spans 286-298 (SSADKRKYGDPDA). Residues Asp331 and His350 contribute to the active site.

The protein belongs to the bacterial TGase family.

The enzyme catalyses L-glutaminyl-[protein] + L-lysyl-[protein] = [protein]-L-lysyl-N(6)-5-L-glutamyl-[protein] + NH4(+). Its function is as follows. Catalyzes the cross-linking of proteins and the conjugation of polyamines to proteins. This chain is Protein-glutamine gamma-glutamyltransferase, found in Streptomyces mobaraensis (Streptoverticillium mobaraense).